Here is a 166-residue protein sequence, read N- to C-terminus: MRLILLSSLLLLGIFLADGDEVDPDGKVLNSLIYGVMHLQREFANLKGAFLTVHRARSFGSGSERLYVTNKEIKNFEALRQICEQAEGHIPSPQLENQNKAFANVLERHGKEAYLVVGDSANFTNWAAGEPNKAAGTCVKADTHGSWHSASCDDNLLVVCEFYFIL.

An N-terminal signal peptide occupies residues 1-19 (MRLILLSSLLLLGIFLADG). One can recognise a C-type lectin domain in the interval 46-161 (LKGAFLTVHR…CDDNLLVVCE (116 aa)). 2 cysteine pairs are disulfide-bonded: cysteine 83–cysteine 160 and cysteine 138–cysteine 152. N-linked (GlcNAc...) asparagine glycosylation is present at asparagine 122.

The protein belongs to the alpha-type phospholipase A2 inhibitor family. In terms of assembly, homotrimer; non-covalently linked. In terms of tissue distribution, expressed by the liver.

The protein localises to the secreted. Functionally, this phospholipase A2 inhibitor binds directly phospholipase A2 in the presence or absence of calcium. The polypeptide is Phospholipase A2 inhibitor clone 05 (Bothrops moojeni (Lance-headed viper)).